Reading from the N-terminus, the 193-residue chain is Phosphoheptose isomerase (193 aa).

The SIS domain maps to 37 to 193 (LADSFKAGGK…QLIEKEMVKA (157 aa)). 52–54 (NGG) contacts substrate. Positions 61 and 65 each coordinate Zn(2+). Residues E65, 93–94 (ND), 119–121 (STS), S124, and Q172 each bind substrate. Positions 172 and 180 each coordinate Zn(2+).

Belongs to the SIS family. GmhA subfamily. Homotetramer. Zn(2+) serves as cofactor.

It localises to the cytoplasm. The enzyme catalyses 2 D-sedoheptulose 7-phosphate = D-glycero-alpha-D-manno-heptose 7-phosphate + D-glycero-beta-D-manno-heptose 7-phosphate. It functions in the pathway carbohydrate biosynthesis; D-glycero-D-manno-heptose 7-phosphate biosynthesis; D-glycero-alpha-D-manno-heptose 7-phosphate and D-glycero-beta-D-manno-heptose 7-phosphate from sedoheptulose 7-phosphate: step 1/1. Catalyzes the isomerization of sedoheptulose 7-phosphate in D-glycero-D-manno-heptose 7-phosphate. The protein is Phosphoheptose isomerase of Yersinia pseudotuberculosis serotype O:1b (strain IP 31758).